A 998-amino-acid polypeptide reads, in one-letter code: SEC23-interacting protein (998 aa).

The interaction with SEC23A stretch occupies residues 1-363; sequence MADRKANGGG…YTEEFSEKLE (363 aa). A disordered region spans residues 50–246; sequence LPGEDSTDVG…AQQQVPARPA (197 aa). Acidic residues predominate over residues 54–63; the sequence is DSTDVGEEDS. A compositionally biased stretch (polar residues) spans 65–78; that stretch reads LGQTSTHTSTPQTF. Low complexity predominate over residues 79 to 88; sequence SYFSQVSSSS. 3 stretches are compositionally biased toward polar residues: residues 94 to 108, 143 to 158, and 232 to 241; these read IGQS…SAGQ, PPSQ…SQPS, and AMQSPAQQQV. At Ser-600 the chain carries Phosphoserine. An SAM domain is found at 640–703; it reads EEPLTLHGTL…NFVKLKAAKL (64 aa). The disordered stretch occupies residues 720–742; the sequence is TKGQDESAPKTKEMASPSSESNE. The span at 722–732 shows a compositional bias: basic and acidic residues; that stretch reads GQDESAPKTKE. Phosphoserine is present on residues Ser-735, Ser-748, and Ser-924. One can recognise a DDHD domain in the interval 777 to 987; the sequence is LDFEPEIFFA…ALLLLKEIYR (211 aa).

Belongs to the PA-PLA1 family. Interacts with SEC23A.

It localises to the cytoplasmic vesicle. It is found in the COPII-coated vesicle membrane. Its subcellular location is the endoplasmic reticulum. Plays a role in the organization of endoplasmic reticulum exit sites. Specifically binds to phosphatidylinositol 3-phosphate (PI(3)P), phosphatidylinositol 4-phosphate (PI(4)P) and phosphatidylinositol 5-phosphate (PI(5)P). In Mus musculus (Mouse), this protein is SEC23-interacting protein (Sec23ip).